The primary structure comprises 568 residues: ATP-dependent RNA helicase MRH4, mitochondrial (568 aa).

Residues 1–50 (MVSILAIRTFNPLGHFVSTQCVRAYAINSVRAGSKSSSVRAGSKNDTTRA) constitute a mitochondrion transit peptide. Positions 36–49 (SSSVRAGSKNDTTR) are enriched in polar residues. Residues 36–64 (SSSVRAGSKNDTTRASSKKNKAGKSKLQL) are disordered. The Q motif signature appears at 143–150 (EIHPSPIQ). Positions 160-348 (NLMEPKLQVH…TKMFPNAIPL (189 aa)) constitute a Helicase ATP-binding domain. 173-180 (AETGSGKT) contacts ATP. The DEAD box signature appears at 296–299 (DEAD). The Helicase C-terminal domain maps to 379 to 568 (ALAQTLYAIA…TILKKNKALT (190 aa)).

Belongs to the DEAD box helicase family. MRH4 subfamily.

The protein resides in the mitochondrion. The enzyme catalyses ATP + H2O = ADP + phosphate + H(+). Its function is as follows. ATP-binding RNA helicase involved in mitochondrial RNA metabolism. Required for maintenance of mitochondrial DNA. In Candida glabrata (strain ATCC 2001 / BCRC 20586 / JCM 3761 / NBRC 0622 / NRRL Y-65 / CBS 138) (Yeast), this protein is ATP-dependent RNA helicase MRH4, mitochondrial (MRH4).